Reading from the N-terminus, the 187-residue chain is Ribosome-recycling factor (187 aa).

This sequence belongs to the RRF family.

It localises to the cytoplasm. In terms of biological role, responsible for the release of ribosomes from messenger RNA at the termination of protein biosynthesis. May increase the efficiency of translation by recycling ribosomes from one round of translation to another. The protein is Ribosome-recycling factor of Flavobacterium johnsoniae (strain ATCC 17061 / DSM 2064 / JCM 8514 / BCRC 14874 / CCUG 350202 / NBRC 14942 / NCIMB 11054 / UW101) (Cytophaga johnsonae).